The primary structure comprises 293 residues: Ribosomal protein L11 methyltransferase (293 aa).

The S-adenosyl-L-methionine site is built by T145, G166, D188, and N230.

It belongs to the methyltransferase superfamily. PrmA family.

It is found in the cytoplasm. The catalysed reaction is L-lysyl-[protein] + 3 S-adenosyl-L-methionine = N(6),N(6),N(6)-trimethyl-L-lysyl-[protein] + 3 S-adenosyl-L-homocysteine + 3 H(+). Its function is as follows. Methylates ribosomal protein L11. This is Ribosomal protein L11 methyltransferase from Escherichia coli O139:H28 (strain E24377A / ETEC).